The primary structure comprises 177 residues: Small ribosomal subunit protein uS5 (177 aa).

One can recognise an S5 DRBM domain in the interval 19 to 82; the sequence is FIEKLVAIKR…DQAQKQMIKV (64 aa).

Belongs to the universal ribosomal protein uS5 family. As to quaternary structure, part of the 30S ribosomal subunit. Contacts proteins S4 and S8.

With S4 and S12 plays an important role in translational accuracy. Functionally, located at the back of the 30S subunit body where it stabilizes the conformation of the head with respect to the body. This chain is Small ribosomal subunit protein uS5, found in Magnetococcus marinus (strain ATCC BAA-1437 / JCM 17883 / MC-1).